A 543-amino-acid chain; its full sequence is Glutamyl-tRNA(Gln) amidotransferase subunit A, chloroplastic/mitochondrial (543 aa).

Catalysis depends on charge relay system residues Lys-123 and Ser-198. Catalysis depends on Ser-222, which acts as the Acyl-ester intermediate.

The protein belongs to the amidase family. GatA subfamily. Subunit of the heterotrimeric GatCAB amidotransferase (AdT) complex, composed of A, B and C subunits.

It localises to the mitochondrion. The protein localises to the plastid. The protein resides in the chloroplast stroma. The enzyme catalyses L-glutamyl-tRNA(Gln) + L-glutamine + ATP + H2O = L-glutaminyl-tRNA(Gln) + L-glutamate + ADP + phosphate + H(+). Functionally, allows the formation of correctly charged Gln-tRNA(Gln) through the transamidation of misacylated Glu-tRNA(Gln) in chloroplasts and mitochondria. The reaction takes place in the presence of glutamine and ATP through an activated gamma-phospho-Glu-tRNA(Gln). The polypeptide is Glutamyl-tRNA(Gln) amidotransferase subunit A, chloroplastic/mitochondrial (Oryza sativa subsp. indica (Rice)).